A 652-amino-acid chain; its full sequence is Aorsin (652 aa).

A signal peptide spans 1–22; the sequence is MRPLSHLSFFNGLLLGLSALSA. A propeptide spans 23 to 215 (removed in mature form); the sequence is ATSVVHERRE…PRPIQQHDVK (193 aa). The N-linked (GlcNAc...) asparagine glycan is linked to Asn-112. Residues 177 to 211 form a disordered region; sequence VNLNPSSGKPSSIRRRAAASKKTKLPARGPRPIQQ. Positions 188–201 are enriched in basic residues; that stretch reads SIRRRAAASKKTKL. N-linked (GlcNAc...) asparagine glycans are attached at residues Asn-218 and Asn-247. The Peptidase S53 domain maps to 225–651; sequence LITPECIRAL…PKMLKLWLDL (427 aa). Catalysis depends on charge relay system residues Glu-301 and Asp-305. N-linked (GlcNAc...) asparagine glycosylation is found at Asn-331 and Asn-445. Ser-569 (charge relay system) is an active-site residue. Positions 610 and 611 each coordinate Ca(2+). An N-linked (GlcNAc...) asparagine glycan is attached at Asn-613. Ca(2+)-binding residues include Gly-629 and Asp-631.

Requires Ca(2+) as cofactor. In terms of processing, N-glycosylated. O-glycosylated.

The protein localises to the secreted. It localises to the extracellular space. Its activity is regulated as follows. Inhibited by antipain and leupeptin. Serine endopeptidase which hydrolyzes a range of fluorogenic peptide substrates containing the basic residues arginine or lysine at the P1 position and prefers paired basic resides. Also hydrolyzes clupeine and salmine, activates plasminogen and converts trypsinogen to trypsin. The chain is Aorsin from Aspergillus oryzae (strain ATCC 42149 / RIB 40) (Yellow koji mold).